The chain runs to 342 residues: Autoinducer 2 import system permease protein LsrC (342 aa).

Over 1 to 13 the chain is Periplasmic; that stretch reads MLKFIQNNREITA. The helical transmembrane segment at 14–34 threads the bilayer; sequence LLAVVLLFVLPGFLDRQYLSV. The Cytoplasmic portion of the chain corresponds to 35–38; that stretch reads QTLT. The chain crosses the membrane as a helical span at residues 39–59; sequence MVYSSAQILILLAMGATLVML. Topologically, residues 60 to 69 are periplasmic; that stretch reads TRNIDVSVGS. The chain crosses the membrane as a helical span at residues 70-90; it reads ITGMCAVLLGMLLNAGYSLPV. The Cytoplasmic segment spans residues 91–92; sequence AC. Residues 93–113 traverse the membrane as a helical segment; sequence VATLLLGLLAGFFNGVLVAWL. Position 114 (K114) is a topological domain, periplasmic. Residues 115-135 form a helical membrane-spanning segment; the sequence is IPAIVATLGTLGLYRGIMLLW. At 136-154 the chain is on the cytoplasmic side; that stretch reads TGGKWIEGLPAELKQLSAP. The helical transmembrane segment at 155 to 175 threads the bilayer; sequence LLLGVSAIGWLTIILVAFMAW. The Periplasmic segment spans residues 176–212; sequence LLAKTAFGRSFYATGDNLQGARQLGVRTEAIRIVAFS. A helical transmembrane segment spans residues 213–233; sequence LNGCMAALAGIVFASQIGFIP. The Cytoplasmic segment spans residues 234–251; the sequence is NQTGTGLEMKAIAACVLG. Residues 252-272 form a helical membrane-spanning segment; sequence GISLLGGSGAIIGAVLGAWFL. Residues 273–283 lie on the Periplasmic side of the membrane; it reads TQIDSVLVLLR. A helical membrane pass occupies residues 284-304; it reads IPAWWNDFIAGLVLLAVLVFD. The Cytoplasmic segment spans residues 305–342; it reads GRLRCALERNLRRQKYARFMTPPPSVKPASSGKKREAA.

The protein belongs to the binding-protein-dependent transport system permease family. AraH/RbsC subfamily. In terms of assembly, the complex is composed of two ATP-binding proteins (LsrA), two transmembrane proteins (LsrC and LsrD) and a solute-binding protein (LsrB).

Its subcellular location is the cell inner membrane. Functionally, part of the ABC transporter complex LsrABCD involved in autoinducer 2 (AI-2) import. Probably responsible for the translocation of the substrate across the membrane. This Escherichia coli (strain K12 / DH10B) protein is Autoinducer 2 import system permease protein LsrC (lsrC).